The chain runs to 349 residues: uncharacterized protein (349 aa).

Residues 16–36 (LVITIISTGLIFGMTLVLTGL) traverse the membrane as a helical segment. The disordered stretch occupies residues 111–139 (FGAPEHGPGMPRVSEGRSPSKPDEVAASS). Residues 124-134 (SEGRSPSKPDE) show a composition bias toward basic and acidic residues. 3 helical membrane passes run 231–251 (ISIVAVLLWIVAVLIVGSVVY), 284–304 (VIALLAAVVGVVLAQVLAPLF), and 307–327 (IVAVPVGAYLALPVAAIVIGL).

Belongs to the ABC-4 integral membrane protein family. The complex is composed of two ATP-binding proteins (MT0079), two transmembrane proteins (MT0078) and a solute-binding protein.

The protein resides in the cell membrane. Its function is as follows. Probably part of an ABC transporter complex. Probably responsible for the translocation of the substrate across the membrane. This is an uncharacterized protein from Mycobacterium tuberculosis (strain CDC 1551 / Oshkosh).